The chain runs to 416 residues: Enterobactin exporter EntS (416 aa).

Residues 1-21 are Cytoplasmic-facing; it reads MNKQSWLLNLSLLKTHPAFRA. The helical transmembrane segment at 22–42 threads the bilayer; sequence VFLARFISIVSLGLLGVAVPV. At 43–55 the chain is on the periplasmic side; that stretch reads QIQMMTHSTWQVG. Residues 56–76 form a helical membrane-spanning segment; sequence LSVTLTGGAMFVGLMVGGVLA. Residues 77 to 83 are Cytoplasmic-facing; that stretch reads DRYERKK. The chain crosses the membrane as a helical span at residues 84 to 104; it reads VILLARGTCGIGFIGLCLNAL. Topologically, residues 105–109 are periplasmic; sequence LPEPS. The helical transmembrane segment at 110-130 threads the bilayer; that stretch reads LLAIYLLGLWDGFFASLGVTA. Residues 131–156 lie on the Cytoplasmic side of the membrane; it reads LLAATPALVGRENLMQAGAITMLTVR. Residues 157–177 form a helical membrane-spanning segment; the sequence is LGSVISPMIGGLLLATGGVAW. Position 178 (Asn-178) is a topological domain, periplasmic. The chain crosses the membrane as a helical span at residues 179-199; that stretch reads YGLAAAGTFITLLPLLSLPAL. Residues 200 to 218 lie on the Cytoplasmic side of the membrane; sequence PPPPQPREHPLKSLLAGFR. The chain crosses the membrane as a helical span at residues 219–239; it reads FLLASPLVGGIALLGGLLTMA. The Periplasmic portion of the chain corresponds to 240-256; it reads SAVRVLYPALADNWQMS. The helical transmembrane segment at 257 to 277 threads the bilayer; the sequence is AAQIGFLYAAIPLGAAIGALT. At 278–287 the chain is on the cytoplasmic side; it reads SGKLAHSARP. A helical transmembrane segment spans residues 288–307; it reads GLLMLLSTLGSFLAIGLFGL. Residues 308 to 313 lie on the Periplasmic side of the membrane; that stretch reads MPMWIL. The helical transmembrane segment at 314-336 threads the bilayer; sequence GVVCLALFGWLSAVSSLLQYTML. Residues 337-356 are Cytoplasmic-facing; that stretch reads QTQTPEAMLGRINGLWTAQN. Residues 357–377 traverse the membrane as a helical segment; the sequence is VTGDAIGAALLGGLGAMMTPV. Position 378 (Ala-378) is a topological domain, periplasmic. The chain crosses the membrane as a helical span at residues 379-399; that stretch reads SASASGFGLLIIGVLLLLVLV. Topologically, residues 400–416 are cytoplasmic; that stretch reads ELRRFRQTPPQVTASDS.

Belongs to the major facilitator superfamily. EntS (TC 2.A.1.38) family.

The protein resides in the cell inner membrane. Its function is as follows. Component of an export pathway for enterobactin. This Escherichia coli (strain 55989 / EAEC) protein is Enterobactin exporter EntS.